The chain runs to 906 residues: Toll-like receptor 12 (906 aa).

Positions 1–21 (MGRYWLLPGLLLSLPLVTGWS) are cleaved as a signal peptide. Over 22–709 (TSNCLVTEGS…DHCPQTLELK (688 aa)) the chain is Extracellular. Residue Asn-59 is glycosylated (N-linked (GlcNAc...) asparagine). LRR repeat units lie at residues 91–114 (FPGLKVLALSLHLTQLLPGALRGL), 115–140 (GQLQSLSFFDSPLRRSLFLPPDAFSD), 142–170 (ISLQRLHISGPCLDKKAGIRLPPGLQWLG), 198–222 (SWTLQKLDLSSNWKLKMASPGSLQG), 224–247 (QVEILDLTRTPLDAVWLKGLGLQK), 267–290 (HFELQGLIVKESKIGSISQEALAS), 291–314 (CHSLKTLGLSSTGLTKLPPGFLTA), 316–338 (PRLQRLELSGNQLQSAVLCMNET), 341–364 (VSGLTTLDLSGNRLRILPPAAFSC), 366–388 (PHLRELLLRYNQLLSLEGYLFQE), 389–412 (LQQLETLKLDGNPLLHLGKNWLAA), 414–436 (PALTTLSLLDTQIRMSPEPGFWG), 462–484 (LTSLELHIASGTTEHWTLSPAIF), 485–508 (PSLETLTISGGGLKLKLGSQNASG), and 510–533 (FPALQKLSLLKNSLDAFCSQGTSN). The N-linked (GlcNAc...) asparagine glycan is linked to Asn-336. Asn-505 is a glycosylation site (N-linked (GlcNAc...) asparagine). Asn-552 is a glycosylation site (N-linked (GlcNAc...) asparagine). LRR repeat units follow at residues 562–586 (LPSLRELKLASLQSITQPRSVQLEE) and 591–614 (LPQLQALVLSSTGLKSLSAAAFQR). The helical transmembrane segment at 710 to 730 (LFLASSALVFMLIALPLLQEA) threads the bilayer. Residues 731–906 (RNSWIPYLQA…FWTWLRSRLG (176 aa)) lie on the Cytoplasmic side of the membrane. A TIR domain is found at 759 to 905 (FLFDVFVSHC…GFWTWLRSRL (147 aa)).

The protein belongs to the Toll-like receptor family. Binds MYD88 via their respective TIR domains. As to expression, macrophages, liver, kidney and bladder epithelial cells.

Its subcellular location is the membrane. In terms of biological role, participates in the innate immune response to microbial agents. Acts via MYD88 and TRAF6, leading to NF-kappa-B activation, cytokine secretion and the inflammatory response. Plays a role in preventing infection of internal organs of the urogenital system. This Mus musculus (Mouse) protein is Toll-like receptor 12.